A 563-amino-acid polypeptide reads, in one-letter code: Chaperonin GroEL 1 (563 aa).

Residues 29–32 (TIGP), 86–90 (DGTTT), Gly-413, and Asp-492 each bind ATP. Residues 520-541 (DKPEPPSAPGAEGGDPMGGMGG) form a disordered region. Over residues 530-541 (AEGGDPMGGMGG) the composition is skewed to gly residues.

The protein belongs to the chaperonin (HSP60) family. Forms a cylinder of 14 subunits composed of two heptameric rings stacked back-to-back. Interacts with the co-chaperonin GroES.

Its subcellular location is the cytoplasm. The catalysed reaction is ATP + H2O + a folded polypeptide = ADP + phosphate + an unfolded polypeptide.. Functionally, together with its co-chaperonin GroES, plays an essential role in assisting protein folding. The GroEL-GroES system forms a nano-cage that allows encapsulation of the non-native substrate proteins and provides a physical environment optimized to promote and accelerate protein folding. The polypeptide is Chaperonin GroEL 1 (Prochlorococcus marinus (strain NATL1A)).